The following is a 230-amino-acid chain: Broad-specificity phosphatase YOR283W (230 aa).

The active-site Tele-phosphohistidine intermediate is H24. Residues 36 to 37 (QG) and 102 to 105 (ERYM) each bind substrate. E102 serves as the catalytic Proton donor/acceptor.

This sequence belongs to the phosphoglycerate mutase family. BPG-dependent PGAM subfamily.

It is found in the cytoplasm. It localises to the nucleus. Its function is as follows. Metal-independent phosphatase active against a broad range of phosphorylated substrates including nucleoside tri- and diphosphates, phosphorylated organic acids, and amino acids. Shows no activity against phytic acid, phosphorylated carbohydrates, and nucleoside monophosphates. This Saccharomyces cerevisiae (strain ATCC 204508 / S288c) (Baker's yeast) protein is Broad-specificity phosphatase YOR283W.